The primary structure comprises 70 residues: Cytochrome c oxidase subunit 8B, mitochondrial (70 aa).

The N-terminal 24 residues, 1-24, are a transit peptide targeting the mitochondrion; the sequence is MSRLAPPLRLLQAPLKCWAVPKAH. At 25–35 the chain is on the mitochondrial matrix side; it reads VSAKPARTPTS. The chain crosses the membrane as a helical span at residues 36 to 59; it reads PMEQAVGLSVMFVSFLVPSGWVLS. The Mitochondrial intermembrane portion of the chain corresponds to 60-70; it reads HLESYKKSSTT.

It belongs to the cytochrome c oxidase VIII family. Component of the cytochrome c oxidase (complex IV, CIV), a multisubunit enzyme composed of 14 subunits. The complex is composed of a catalytic core of 3 subunits MT-CO1, MT-CO2 and MT-CO3, encoded in the mitochondrial DNA, and 11 supernumerary subunits COX4I, COX5A, COX5B, COX6A, COX6B, COX6C, COX7A, COX7B, COX7C, COX8 and NDUFA4, which are encoded in the nuclear genome. The complex exists as a monomer or a dimer and forms supercomplexes (SCs) in the inner mitochondrial membrane with NADH-ubiquinone oxidoreductase (complex I, CI) and ubiquinol-cytochrome c oxidoreductase (cytochrome b-c1 complex, complex III, CIII), resulting in different assemblies (supercomplex SCI(1)III(2)IV(1) and megacomplex MCI(2)III(2)IV(2)).

It localises to the mitochondrion inner membrane. It functions in the pathway energy metabolism; oxidative phosphorylation. Functionally, component of the cytochrome c oxidase, the last enzyme in the mitochondrial electron transport chain which drives oxidative phosphorylation. The respiratory chain contains 3 multisubunit complexes succinate dehydrogenase (complex II, CII), ubiquinol-cytochrome c oxidoreductase (cytochrome b-c1 complex, complex III, CIII) and cytochrome c oxidase (complex IV, CIV), that cooperate to transfer electrons derived from NADH and succinate to molecular oxygen, creating an electrochemical gradient over the inner membrane that drives transmembrane transport and the ATP synthase. Cytochrome c oxidase is the component of the respiratory chain that catalyzes the reduction of oxygen to water. Electrons originating from reduced cytochrome c in the intermembrane space (IMS) are transferred via the dinuclear copper A center (CU(A)) of subunit 2 and heme A of subunit 1 to the active site in subunit 1, a binuclear center (BNC) formed by heme A3 and copper B (CU(B)). The BNC reduces molecular oxygen to 2 water molecules using 4 electrons from cytochrome c in the IMS and 4 protons from the mitochondrial matrix. The sequence is that of Cytochrome c oxidase subunit 8B, mitochondrial (COX8B) from Carlito syrichta (Philippine tarsier).